Reading from the N-terminus, the 276-residue chain is ADP-dependent (S)-NAD(P)H-hydrate dehydratase (276 aa).

Positions 7 to 274 constitute a YjeF C-terminal domain; the sequence is METLNSINIP…NEIPYAMKQL (268 aa). (6S)-NADPHX-binding residues include Ala-42, Gly-105, and His-154. Gly-216 is an AMP binding site. Asp-217 contributes to the (6S)-NADPHX binding site.

This sequence belongs to the NnrD/CARKD family. Homotetramer. Mg(2+) serves as cofactor.

The catalysed reaction is (6S)-NADHX + ADP = AMP + phosphate + NADH + H(+). It carries out the reaction (6S)-NADPHX + ADP = AMP + phosphate + NADPH + H(+). Its function is as follows. Catalyzes the dehydration of the S-form of NAD(P)HX at the expense of ADP, which is converted to AMP. Together with NAD(P)HX epimerase, which catalyzes the epimerization of the S- and R-forms, the enzyme allows the repair of both epimers of NAD(P)HX, a damaged form of NAD(P)H that is a result of enzymatic or heat-dependent hydration. The chain is ADP-dependent (S)-NAD(P)H-hydrate dehydratase from Staphylococcus aureus (strain NCTC 8325 / PS 47).